A 260-amino-acid polypeptide reads, in one-letter code: Acetylglutamate kinase (260 aa).

Residues G46–G47, R68, and N160 each bind substrate.

This sequence belongs to the acetylglutamate kinase family. ArgB subfamily.

It is found in the cytoplasm. The enzyme catalyses N-acetyl-L-glutamate + ATP = N-acetyl-L-glutamyl 5-phosphate + ADP. It functions in the pathway amino-acid biosynthesis; L-arginine biosynthesis; N(2)-acetyl-L-ornithine from L-glutamate: step 2/4. In terms of biological role, catalyzes the ATP-dependent phosphorylation of N-acetyl-L-glutamate. The sequence is that of Acetylglutamate kinase from Shewanella sp. (strain W3-18-1).